A 573-amino-acid chain; its full sequence is Dihydroxy-acid dehydratase (573 aa).

C62 provides a ligand contact to [2Fe-2S] cluster. D94 is a binding site for Mg(2+). Position 135 (C135) interacts with [2Fe-2S] cluster. Residues D136 and K137 each contribute to the Mg(2+) site. Residue K137 is modified to N6-carboxylysine. C212 serves as a coordination point for [2Fe-2S] cluster. E463 lines the Mg(2+) pocket. S489 acts as the Proton acceptor in catalysis.

This sequence belongs to the IlvD/Edd family. As to quaternary structure, homodimer. It depends on [2Fe-2S] cluster as a cofactor. The cofactor is Mg(2+).

The catalysed reaction is (2R)-2,3-dihydroxy-3-methylbutanoate = 3-methyl-2-oxobutanoate + H2O. It catalyses the reaction (2R,3R)-2,3-dihydroxy-3-methylpentanoate = (S)-3-methyl-2-oxopentanoate + H2O. Its pathway is amino-acid biosynthesis; L-isoleucine biosynthesis; L-isoleucine from 2-oxobutanoate: step 3/4. The protein operates within amino-acid biosynthesis; L-valine biosynthesis; L-valine from pyruvate: step 3/4. In terms of biological role, functions in the biosynthesis of branched-chain amino acids. Catalyzes the dehydration of (2R,3R)-2,3-dihydroxy-3-methylpentanoate (2,3-dihydroxy-3-methylvalerate) into 2-oxo-3-methylpentanoate (2-oxo-3-methylvalerate) and of (2R)-2,3-dihydroxy-3-methylbutanoate (2,3-dihydroxyisovalerate) into 2-oxo-3-methylbutanoate (2-oxoisovalerate), the penultimate precursor to L-isoleucine and L-valine, respectively. The protein is Dihydroxy-acid dehydratase of Renibacterium salmoninarum (strain ATCC 33209 / DSM 20767 / JCM 11484 / NBRC 15589 / NCIMB 2235).